A 500-amino-acid chain; its full sequence is Abscisic acid 8'-hydroxylase 3 (500 aa).

The chain crosses the membrane as a helical span at residues 3 to 23 (ASFVIVIVISFFISLAFMCYV). Cysteine 426 serves as a coordination point for heme.

It belongs to the cytochrome P450 family. The cofactor is heme.

The protein localises to the membrane. It carries out the reaction 2-cis-(+)-abscisate + reduced [NADPH--hemoprotein reductase] + O2 = (+)-8'-hydroxyabscisate + oxidized [NADPH--hemoprotein reductase] + H2O + H(+). It participates in plant hormone degradation; abscisic acid degradation. In terms of biological role, involved in the oxidative degradation of abscisic acid. This chain is Abscisic acid 8'-hydroxylase 3 (CYP707A7), found in Oryza sativa subsp. japonica (Rice).